A 313-amino-acid polypeptide reads, in one-letter code: MNATERPGSDGTGSPESVGSRLKNLLHGPGTCQLMGVHDGLSARIAVAEGFEALWASGLCMSTARGVRDSDEASWTELLTLVGTMTEAAPGAPVLVDGDTGYGNFNTARPSPPAPSCLGAAGVCFEDKVFPKMNSFFGDGHQLAPIGEFSGKIKACKDTQRDPGFVVVARTEALISNLPMEEALTRAHAYVEAVADGLFIHSRMSTPQQIAEFMRQWDGSAPILIAPTTYHRPSLDDFAALGIAGCIWANHSMRAAFSAMRDVCQQIRADRGIFGVEERVAPLKEIFGLLDYESLEQDENRYTQAPDLAPVQG.

Residues 1–23 (MNATERPGSDGTGSPESVGSRLK) are disordered. Catalysis depends on Asp-69, which acts as the Nucleophile.

This sequence belongs to the isocitrate lyase/PEP mutase superfamily. PEP mutase family.

It catalyses the reaction phosphoenolpyruvate + H(+) = 3-phosphonopyruvate. It participates in secondary metabolite biosynthesis; bialaphos biosynthesis. In terms of biological role, formation of a carbon-phosphorus bond by converting phosphoenolpyruvate (PEP) to phosphonopyruvate (P-Pyr). The sequence is that of Phosphoenolpyruvate phosphomutase (ppm) from Streptomyces viridochromogenes (strain DSM 40736 / JCM 4977 / BCRC 1201 / Tue 494).